Reading from the N-terminus, the 370-residue chain is G-protein coupled receptor homolog K2 (370 aa).

Over 1-61 (MTSPTNSTML…CTFLEDTKYH (61 aa)) the chain is Extracellular. N-linked (GlcNAc...) asparagine; by host glycans are attached at residues Asn-6 and Asn-51. The helical transmembrane segment at 62–82 (IIVIHIILFLLGSIGNIFVVS) threads the bilayer. Over 83–94 (LIAFKRNKSITD) the chain is Cytoplasmic. Residues 95 to 115 (IYILNLSMSDCIFVFQIPFIV) form a helical membrane-spanning segment. At 116-131 (YSKLDQWIFGNILCKI) the chain is on the extracellular side. The helical transmembrane segment at 132 to 152 (MSVLYYVGFFSNMFIITLMSI) threads the bilayer. At 153–171 (DRYFAIVHPIKRQPYRTKR) the chain is on the cytoplasmic side. The helical transmembrane segment at 172–192 (IGILMCCSAWLLSLILSSPVS) threads the bilayer. Residues 193-223 (KLYENIPHMSKDIYQCTLTNENDSIIAFIKR) are Extracellular-facing. Residues 224–244 (LMQIEITILGFLIPIIIFVYC) traverse the membrane as a helical segment. At 245 to 265 (YYRIFTTVVRLRNRRKYKSIK) the chain is on the cytoplasmic side. A helical membrane pass occupies residues 266–286 (IVLMIVVCSLICWIPLYIVLM). Over 287–300 (IATIVSLYTSNIFR) the chain is Extracellular. A helical transmembrane segment spans residues 301 to 321 (HLCLYLNLAYAITFSETISLA). The Cytoplasmic segment spans residues 322–370 (RCCINPIIYTLIGEHVRSRISSICSCIYRDNRIRKKLFSRKSSSSSNII).

It belongs to the G-protein coupled receptor 1 family.

Its subcellular location is the host cell membrane. In terms of biological role, putative chemokine receptor. This chain is G-protein coupled receptor homolog K2, found in Sus scrofa (Pig).